Consider the following 730-residue polypeptide: MEEIQSQSDLYRSSSSSASSPTSRVPSSHFFYVRKPGSLRQPISFEDSPEWEDTPDVDLRMEDEAGGGDSINDATTTPVSPSLSKMNSGSMASPPVPEGGAGTGVVRKIAGASIAWKDLTVTMKGKRKYSDKVVKSSNGYAFPGTMTVIMGPAKSGKSTLLRALAGRLPPSAKMYGEVFVNGSKSHMPYGSYGFVERETQLIGSLTVREFLYYSALLQLPGFLFQKRSVVEDAIQAMSLSDYANKLIGGHCYMKGLRSGERRRVSIARELVMRPHILFIDEPLYHLDSVSALLMMVTLKKLASMGCTLVFTIYQSSTEVFGLFDRICLLSNGNTLFFGETLACLQHFSNAGFPCPIMQSPSDHFLRAINTDFDRIIAMCKNWQDDNGDFSAVNMDTAVAIRTLEATYKSSADADSVEAMIIKLTEREGTQLKSKGKAGAATRVAVLTWRSLLVMSREWKYYWLRLILYMILTLSIGTLYSGLGHSLSSVATRVAAVFVFVSFASLLGIAGIPSLLKEIKIYRSEASNQHSGAFVFLLGQFLGSIPFLFLMSISSSLVFYFMVGLRDDFSLLMYFVLNFFMCLLVNEGLMLFIACIWRDVYWSTLTLISVHVIMMLAAGHFRIRTALPKPVWTYPFAYISFHTYSIEGLLENEYLGEVFAVGEVRSISGYQAIQGNYQISPDTNAKWRNMLVLLAMAFGYRLLVYVLLRFGLNKNVSGRLLLSHKKNNSSR.

Residues 1–28 (MEEIQSQSDLYRSSSSSASSPTSRVPSS) show a composition bias toward low complexity. The segment at 1–100 (MEEIQSQSDL…MASPPVPEGG (100 aa)) is disordered. The segment covering 47–56 (DSPEWEDTPD) has biased composition (acidic residues). Polar residues predominate over residues 72–91 (NDATTTPVSPSLSKMNSGSM). Serine 93 bears the Phosphoserine mark. Residues 114-356 (IAWKDLTVTM…FSNAGFPCPI (243 aa)) form the ABC transporter domain. An ATP-binding site is contributed by 151–158 (GPAKSGKS). Residues 441-653 (TRVAVLTWRS…SIEGLLENEY (213 aa)) form the ABC transmembrane type-2 domain. 6 helical membrane passes run 465–485 (LILYMILTLSIGTLYSGLGHS), 495–515 (AVFVFVSFASLLGIAGIPSLL), 532–552 (AFVFLLGQFLGSIPFLFLMSI), 575–595 (VLNFFMCLLVNEGLMLFIACI), 600–620 (YWSTLTLISVHVIMMLAAGHF), and 689–709 (MLVLLAMAFGYRLLVYVLLRF).

Belongs to the ABC transporter superfamily. ABCG family. Eye pigment precursor importer (TC 3.A.1.204) subfamily.

The protein localises to the membrane. In Arabidopsis thaliana (Mouse-ear cress), this protein is ABC transporter G family member 3 (ABCG3).